The sequence spans 481 residues: UDP-N-acetylmuramoyl-L-alanyl-D-glutamate--L-lysine ligase (481 aa).

Serine 42 contributes to the UDP-N-acetyl-alpha-D-muramoyl-L-alanyl-D-glutamate binding site. Position 118-124 (118-124 (GTKGKTT)) interacts with ATP. UDP-N-acetyl-alpha-D-muramoyl-L-alanyl-D-glutamate-binding positions include glutamine 158, 160 to 161 (TT), serine 187, and arginine 195. Lysine 229 is modified (N6-carboxylysine). The short motif at 404–407 (DDPN) is the L-lysine recognition motif element.

Belongs to the MurCDEF family. MurE subfamily. Carboxylation is probably crucial for Mg(2+) binding and, consequently, for the gamma-phosphate positioning of ATP.

The protein resides in the cytoplasm. The catalysed reaction is UDP-N-acetyl-alpha-D-muramoyl-L-alanyl-D-glutamate + L-lysine + ATP = UDP-N-acetyl-alpha-D-muramoyl-L-alanyl-gamma-D-glutamyl-L-lysine + ADP + phosphate + H(+). The protein operates within cell wall biogenesis; peptidoglycan biosynthesis. Its function is as follows. Catalyzes the addition of L-lysine to the nucleotide precursor UDP-N-acetylmuramoyl-L-alanyl-D-glutamate (UMAG) in the biosynthesis of bacterial cell-wall peptidoglycan. The chain is UDP-N-acetylmuramoyl-L-alanyl-D-glutamate--L-lysine ligase from Streptococcus pyogenes serotype M3 (strain SSI-1).